Consider the following 340-residue polypeptide: DNA-directed RNA polymerase subunit alpha (340 aa).

The alpha N-terminal domain (alpha-NTD) stretch occupies residues 1–233; that stretch reads MIQDEIKVST…DLFIPLINSE (233 aa). Positions 265 to 340 are alpha C-terminal domain (alpha-CTD); that stretch reads TKDVAFKHIF…IQLPKNKNYL (76 aa).

Belongs to the RNA polymerase alpha chain family. In plastids the minimal PEP RNA polymerase catalytic core is composed of four subunits: alpha, beta, beta', and beta''. When a (nuclear-encoded) sigma factor is associated with the core the holoenzyme is formed, which can initiate transcription.

It localises to the plastid. Its subcellular location is the chloroplast. The enzyme catalyses RNA(n) + a ribonucleoside 5'-triphosphate = RNA(n+1) + diphosphate. DNA-dependent RNA polymerase catalyzes the transcription of DNA into RNA using the four ribonucleoside triphosphates as substrates. This Marchantia polymorpha (Common liverwort) protein is DNA-directed RNA polymerase subunit alpha.